The following is a 583-amino-acid chain: MAGERWRAEGLGEGWAIYVTPRAPIREGRRRLATQNGDGSDAPAYETHPSRHGRREVRFSEEPPEVYGDFEPRAAKERSPGERRTPPEKFRSDSAKEEVRESAYNLRSRQRRQRGPQEAEEMKTRRSTRLEQHSQQAQQQLSPATSGRGLRDAQSLSEDRGEDEPSSQPVTSQTVSKKTVRTPETSVMSEDPISNLCRPPLRSPRPDASIVQHINPFEEGETEDDLESSYSDVTIRIRSRDSVESRDEAAVAAGHHPDSLWGLPHSRGDFTAHENQPSLLPTGCQKNPQEWVEQAVRMRTRMAYNNIQKSDFGNQSPSTSRQQAAVQPPDESSVKIKWWLLILVAALAMGIYWFFHTPVVETTAVQEFQNQMKQLQSKYQSQDEKLWKRGTTFLEKHLNSSLPRPQPAILLLTAAQDAAEVLKCLSEQIADAYSSFRSVRAIRIDGAGKAAQDSDLVKHEVDQELTDGFRNGQNAAVVHRFESLPAGSTLIFYKYCDHENAAFKDVALVLTVLLEEQTLEASLGLKEIEEKVRDFLKVKFTSSDTANSYNHMDPDKLNGLWSRISHLVLPVQPENALKAGSCL.

The Nuclear segment spans residues methionine 1 to tryptophan 339. The interval alanine 23–alanine 208 is disordered. The residue at position 60 (serine 60) is a Phosphoserine. Basic and acidic residues-rich tracts occupy residues phenylalanine 70 to glutamate 101 and glycine 115 to glutamine 132. A phosphoserine mark is found at serine 134, serine 142, serine 155, and serine 157. The span at serine 166–methionine 188 shows a compositional bias: polar residues. Residue serine 189 is modified to Phosphoserine. At threonine 222 the chain carries Phosphothreonine. Serine 228, serine 231, and serine 242 each carry phosphoserine. Residue lysine 309 forms a Glycyl lysine isopeptide (Lys-Gly) (interchain with G-Cter in SUMO2) linkage. Serine 316 carries the post-translational modification Phosphoserine. The helical transmembrane segment at leucine 340 to valine 360 threads the bilayer. Residues histidine 356 to leucine 583 are interaction with TOR1A. The stretch at valine 360–lysine 388 forms a coiled coil. Residues glutamate 361 to leucine 583 lie on the Perinuclear space side of the membrane. N-linked (GlcNAc...) asparagine glycosylation is present at asparagine 399.

This sequence belongs to the TOR1AIP family. Interacts with ATP1B4. Interacts with TOR1A (ATP-bound). Interacts with TOR1B, TOR2A and TOR3A. Interacts with VIM.

The protein localises to the nucleus inner membrane. Required for nuclear membrane integrity. Induces TOR1A and TOR1B ATPase activity and is required for their location on the nuclear membrane. Binds to A- and B-type lamins. Possible role in membrane attachment and assembly of the nuclear lamina. The polypeptide is Torsin-1A-interacting protein 1 (Tor1aip1) (Rattus norvegicus (Rat)).